Consider the following 602-residue polypeptide: Leucine-rich repeat-containing protein 40 (602 aa).

The tract at residues 1–20 (MSRLKRIAGQDPRAGFKAAG) is disordered. Serine 71 bears the Phosphoserine mark. LRR repeat units lie at residues 83 to 104 (DLTKLIISNNKLQSLTDDLRLL), 106 to 127 (ALTVLDIHDNQLTSLPSAMREL), 129 to 150 (NLQKLNVSHNKLKIFPEEITNL), 152 to 173 (NLKCLYLQHNELTCISEGFEQL), 175 to 196 (NLEDLDLSNNRLTTVPASFSSL), 198 to 219 (SLVRLNLSSNQLKSLPAEINRM), 221 to 242 (RLKHLDCNSNLLETIPPELAGM), 244 to 265 (SLELLYLRRNKLRFLPEFPSCS), 266 to 286 (LLKELHVGENQIEMLEAEHLK), 290 to 311 (SILVLDLRDNKLKSVPDEIILL), 313 to 335 (SLERLDLSNNDISSLPYSLGNLH), 336 to 356 (LKFLALEGNPLRTIRREIINK), 400 to 421 (TLKILDYSDKQATLIPDEVFNA), 426 to 447 (IITSINFSKNQLCEIPKRMVEL), 450 to 471 (MVSDVNLSFNKLSFISLELCML), 473 to 494 (KLTFLDLRNNFLNSLPEEMESL), 496 to 517 (RLQTINLSFNRFKMLPEVLYRI), 519 to 540 (TLETILISNNQVGSVDPQKMKM), 543 to 564 (NLTTLDLQNNDLLQIPPELGNC), and 566 to 586 (NLRTLLLDGNPFRVPRAAILI).

The polypeptide is Leucine-rich repeat-containing protein 40 (LRRC40) (Macaca fascicularis (Crab-eating macaque)).